Consider the following 312-residue polypeptide: tRNA dimethylallyltransferase (312 aa).

11–18 (GLTATGKT) provides a ligand contact to ATP. Residue 13–18 (TATGKT) participates in substrate binding. Positions 36 to 39 (DSMC) are interaction with substrate tRNA.

It belongs to the IPP transferase family. As to quaternary structure, monomer. It depends on Mg(2+) as a cofactor.

The catalysed reaction is adenosine(37) in tRNA + dimethylallyl diphosphate = N(6)-dimethylallyladenosine(37) in tRNA + diphosphate. Functionally, catalyzes the transfer of a dimethylallyl group onto the adenine at position 37 in tRNAs that read codons beginning with uridine, leading to the formation of N6-(dimethylallyl)adenosine (i(6)A). The protein is tRNA dimethylallyltransferase of Caldicellulosiruptor bescii (strain ATCC BAA-1888 / DSM 6725 / KCTC 15123 / Z-1320) (Anaerocellum thermophilum).